A 655-amino-acid chain; its full sequence is p-hydroxybenzoic acid efflux pump subunit AaeB (655 aa).

11 consecutive transmembrane segments (helical) span residues Phe13–Leu33, Trp38–Pro58, Leu69–Ile89, Leu93–Val113, Trp121–Leu141, Glu152–Ile172, Leu370–Val390, Phe407–Pro427, Gln431–Val451, Met459–Phe479, and Phe482–Leu502.

It belongs to the aromatic acid exporter ArAE (TC 2.A.85) family.

It is found in the cell inner membrane. Functionally, forms an efflux pump with AaeA. Could function as a metabolic relief valve, allowing to eliminate certain compounds when they accumulate to high levels in the cell. The protein is p-hydroxybenzoic acid efflux pump subunit AaeB of Escherichia coli (strain K12 / MC4100 / BW2952).